The primary structure comprises 403 residues: S-adenosylmethionine synthase (403 aa).

His17 provides a ligand contact to ATP. Asp19 serves as a coordination point for Mg(2+). Glu45 serves as a coordination point for K(+). The L-methionine site is built by Glu58 and Gln104. The interval 104-114 (QSPDIAQGVDT) is flexible loop. ATP contacts are provided by residues 179–181 (DGK), 250–251 (KF), Asp259, 265–266 (RK), Ala282, and Lys286. Residue Asp259 participates in L-methionine binding. An L-methionine-binding site is contributed by Lys290.

The protein belongs to the AdoMet synthase family. In terms of assembly, homotetramer; dimer of dimers. The cofactor is Mg(2+). Requires K(+) as cofactor.

Its subcellular location is the cytoplasm. The catalysed reaction is L-methionine + ATP + H2O = S-adenosyl-L-methionine + phosphate + diphosphate. Its pathway is amino-acid biosynthesis; S-adenosyl-L-methionine biosynthesis; S-adenosyl-L-methionine from L-methionine: step 1/1. Catalyzes the formation of S-adenosylmethionine (AdoMet) from methionine and ATP. The overall synthetic reaction is composed of two sequential steps, AdoMet formation and the subsequent tripolyphosphate hydrolysis which occurs prior to release of AdoMet from the enzyme. The chain is S-adenosylmethionine synthase from Mycobacterium marinum (strain ATCC BAA-535 / M).